We begin with the raw amino-acid sequence, 144 residues long: Bacilliredoxin BLi02323/BL05224 (144 aa).

The protein belongs to the bacilliredoxin family.

The protein is Bacilliredoxin BLi02323/BL05224 of Bacillus licheniformis (strain ATCC 14580 / DSM 13 / JCM 2505 / CCUG 7422 / NBRC 12200 / NCIMB 9375 / NCTC 10341 / NRRL NRS-1264 / Gibson 46).